The chain runs to 201 residues: Ras-related protein Rab-9B (201 aa).

10 residues coordinate GTP: valine 18, glycine 19, lysine 20, serine 21, serine 22, aspartate 33, serine 34, alanine 36, histidine 38, and threonine 39. Residue serine 21 coordinates Mg(2+). Residues 31-42 (KFDSQAFHTIGV) carry the Switch 1 motif. Serine 34 bears the Phosphoserine mark. Residues threonine 39 and aspartate 62 each contribute to the Mg(2+) site. Residues 64 to 78 (AGQERFKSLRTPFYR) carry the Switch 2 motif. The GTP site is built by glycine 65, asparagine 124, lysine 125, alanine 155, and lysine 156. 2 S-geranylgeranyl cysteine lipidation sites follow: cysteine 200 and cysteine 201.

Belongs to the small GTPase superfamily. Rab family. Interacts (GTP-bound form) with SGSM1; the GDP-bound form has much lower affinity for SGSM1. The GTP-bound form but not the GDP-bound form interacts with HPS4 and the BLOC-3 complex (heterodimer of HPS1 and HPS4) but does not interact with HPS1 alone. Interacts (GTP-bound form) with NDE1. Mg(2+) is required as a cofactor.

It is found in the cell membrane. The protein localises to the cytoplasmic vesicle. The protein resides in the phagosome membrane. It carries out the reaction GTP + H2O = GDP + phosphate + H(+). Regulated by guanine nucleotide exchange factors (GEFs) which promote the exchange of bound GDP for free GTP. Regulated by GTPase activating proteins (GAPs) which increase the GTP hydrolysis activity. Inhibited by GDP dissociation inhibitors (GDIs). Functionally, the small GTPases Rab are key regulators of intracellular membrane trafficking, from the formation of transport vesicles to their fusion with membranes. Rabs cycle between an inactive GDP-bound form and an active GTP-bound form that is able to recruit to membranes different sets of downstream effectors directly responsible for vesicle formation, movement, tethering and fusion. RAB9B is involved in the transport of proteins between the endosomes and the trans Golgi network. May use NDE1/NDEL1 as an effector to interact with the dynein motor complex in order to control retrograde trafficking of RAB9-associated late endosomes to the TGN. In Pongo abelii (Sumatran orangutan), this protein is Ras-related protein Rab-9B (RAB9B).